The sequence spans 276 residues: Ribonuclease 3 (276 aa).

Positions methionine 1–serine 29 are disordered. A compositionally biased stretch (basic and acidic residues) spans lysine 9 to aspartate 25. Residues histidine 31 to glycine 157 form the RNase III domain. Glutamate 70 contacts Mg(2+). Residue aspartate 74 is part of the active site. Mg(2+) is bound by residues aspartate 143 and glutamate 146. The active site involves glutamate 146. A DRBM domain is found at aspartate 184–alanine 252. A disordered region spans residues tyrosine 227–alanine 276. Positions valine 265 to alanine 276 are enriched in acidic residues.

Belongs to the ribonuclease III family. Homodimer. It depends on Mg(2+) as a cofactor.

The protein localises to the cytoplasm. It carries out the reaction Endonucleolytic cleavage to 5'-phosphomonoester.. Digests double-stranded RNA. Involved in the processing of primary rRNA transcript to yield the immediate precursors to the large and small rRNAs (23S and 16S). Also processes some mRNAs, and tRNAs when they are encoded in the rRNA operon. May modulate key aspects of gene expression as its absence has extensive effects on the abundance of about 200 different transcripts. Probably processes pre-crRNA and tracrRNA of type II CRISPR loci if present in the organism. This chain is Ribonuclease 3 (rnc), found in Streptomyces coelicolor (strain ATCC BAA-471 / A3(2) / M145).